Consider the following 29-residue polypeptide: Dermaseptin-1.2TR (29 aa).

Val29 bears the Valine amide mark.

As to expression, expressed by the skin glands.

The protein localises to the secreted. Has antimicrobial activity. The protein is Dermaseptin-1.2TR of Phyllomedusa trinitatis (Trinidad leaf frog).